A 189-amino-acid chain; its full sequence is GTP cyclohydrolase 1 (189 aa).

Positions 78, 81, and 150 each coordinate Zn(2+).

This sequence belongs to the GTP cyclohydrolase I family. In terms of assembly, toroid-shaped homodecamer, composed of two pentamers of five dimers.

It catalyses the reaction GTP + H2O = 7,8-dihydroneopterin 3'-triphosphate + formate + H(+). It participates in cofactor biosynthesis; 7,8-dihydroneopterin triphosphate biosynthesis; 7,8-dihydroneopterin triphosphate from GTP: step 1/1. This chain is GTP cyclohydrolase 1, found in Listeria welshimeri serovar 6b (strain ATCC 35897 / DSM 20650 / CCUG 15529 / CIP 8149 / NCTC 11857 / SLCC 5334 / V8).